Consider the following 304-residue polypeptide: GTPase Era (304 aa).

One can recognise an Era-type G domain in the interval 9–177 (HSGFVAIVGR…VTTLSQHMPE (169 aa)). The tract at residues 17–24 (GRPNVGKS) is G1. 17 to 24 (GRPNVGKS) is a GTP binding site. Positions 43–47 (QTTRN) are G2. The G3 stretch occupies residues 64–67 (DTPG). GTP contacts are provided by residues 64–68 (DTPGI) and 127–130 (NKID). Residues 127–130 (NKID) are G4. Positions 156 to 158 (ISA) are G5. Residues 208–285 (TRQEVPHSVA…YLELWVKVSE (78 aa)) enclose the KH type-2 domain.

It belongs to the TRAFAC class TrmE-Era-EngA-EngB-Septin-like GTPase superfamily. Era GTPase family. In terms of assembly, monomer.

It is found in the cytoplasm. The protein resides in the cell membrane. Its function is as follows. An essential GTPase that binds both GDP and GTP, with rapid nucleotide exchange. Plays a role in 16S rRNA processing and 30S ribosomal subunit biogenesis and possibly also in cell cycle regulation and energy metabolism. The sequence is that of GTPase Era from Pediococcus pentosaceus (strain ATCC 25745 / CCUG 21536 / LMG 10740 / 183-1w).